Consider the following 477-residue polypeptide: MDIISSYSPIHVVGGGLAGSEAAWQIASAGVPVILHEMRGVRGTDAHKTDGLAELVCSNSFRSDDATSNAVGVIHAEMRMAGSLIMAAADRHQVPAGGALAVDRDGFSDAVTRAIHDHPLITVMREEITGLPPSDWDLAIVATGPLTAPSLAAAIQAETGEDSLAFFDAIAPIVYRESIDMDICWYQSRYDKVGPGGTGKDYINCPMDEAQYNAFVNALIAGDTVGFKEWEGTPYFDGCLPIEVMAERGRETLRHGPMKPMGLTNAHNPTVKAYAVVQLRQDNALGTLYNMVGFQTKLKYGAQAEIFRMIPGLENAEFARLGGLHRNTYINSPTLLDPSLTLKSRPGLRFAGQITGCEGYVESASVGLMAGRFAAAERKGEAISLPPATTALGSLLGHITGGHIVTDEEPGKRSFQPMNINFGLFPELEPGSIVKPEGVKRFRGKDKTIMKRQLIARRALADCAAWLGQTRTLAERA.

FAD is bound at residue 14–19 (GGGLAG).

It belongs to the MnmG family. TrmFO subfamily. Requires FAD as cofactor.

The protein resides in the cytoplasm. It catalyses the reaction uridine(54) in tRNA + (6R)-5,10-methylene-5,6,7,8-tetrahydrofolate + NADH + H(+) = 5-methyluridine(54) in tRNA + (6S)-5,6,7,8-tetrahydrofolate + NAD(+). It carries out the reaction uridine(54) in tRNA + (6R)-5,10-methylene-5,6,7,8-tetrahydrofolate + NADPH + H(+) = 5-methyluridine(54) in tRNA + (6S)-5,6,7,8-tetrahydrofolate + NADP(+). Catalyzes the folate-dependent formation of 5-methyl-uridine at position 54 (M-5-U54) in all tRNAs. The sequence is that of Methylenetetrahydrofolate--tRNA-(uracil-5-)-methyltransferase TrmFO from Rhizobium etli (strain ATCC 51251 / DSM 11541 / JCM 21823 / NBRC 15573 / CFN 42).